The following is a 1073-amino-acid chain: Guanylyl cyclase C (1073 aa).

A signal peptide spans 1–23 (MKTPLLALALWSLLLQLGLTFWP). At 24–433 (SSVSQNCHNG…IPGRGPQILM (410 aa)) the chain is on the extracellular side. 7 N-linked (GlcNAc...) asparagine glycosylation sites follow: Asn-32, Asn-43, Asn-79, Asn-195, Asn-284, Asn-307, and Asn-402. The chain crosses the membrane as a helical span at residues 434-454 (IAVFTLTGTIVLLLLIALLVL). Residues 455–1073 (RKYKREYALR…NTTDNESTHF (619 aa)) lie on the Cytoplasmic side of the membrane. The Protein kinase domain maps to 489-749 (LKIDDDRRRD…KIENTLAKIF (261 aa)). In terms of domain architecture, Guanylate cyclase spans 824 to 954 (TIYFSDIVGF…DTVNTASRME (131 aa)).

This sequence belongs to the adenylyl cyclase class-4/guanylyl cyclase family. As to quaternary structure, homotrimer. Interacts via its C-terminal region with NHERF4. Interacts with the lectin chaperone VIP36. Post-translationally, glycosylation at Asn-79 is required for interaction with VIP36 while glycosylation at Asn-402 modulates ligand-mediated GC-C activation.

It is found in the cell membrane. The protein resides in the endoplasmic reticulum membrane. It carries out the reaction GTP = 3',5'-cyclic GMP + diphosphate. Its function is as follows. Guanylyl cyclase that catalyzes synthesis of cyclic GMP (cGMP) from GTP. The chain is Guanylyl cyclase C (GUCY2C) from Sus scrofa (Pig).